A 35-amino-acid chain; its full sequence is Non-specific lipid-transfer protein 1 (35 aa).

The cysteines at positions 13 and 28 are disulfide-linked.

As to expression, seeds.

In terms of biological role, plant non-specific lipid-transfer proteins transfer phospholipids as well as galactolipids across membranes. May play a role in wax or cutin deposition in the cell walls of expanding epidermal cells and certain secretory tissues. Inhibits the growth of F.oxysporum and P.infestans. The protein is Non-specific lipid-transfer protein 1 of Nigella sativa (Black cumin).